The chain runs to 342 residues: MTAAAPTDVCIIISAKNAADTIARAVASALAEPEAAEVVVIDDGSTDDSASVARAADDGTGRLNVVRFEENRGPAAARNHAIAISHSPLIGVLDADDFFFPGRLGQLLSQDGWDFIADNIAFIDAAQAATAHGRIDRFAPTPRLIDLVGFVEGNISRRGVRRGEIGFLKPLMRRAFLDQHGLRYNETLRLGEDYDLYARALANGARYKIIHSCGYAAVVRGNSLSGSHRTIDLKRLYEADRAILAGSRLSSDAEAAVRRHERHIRDRYELRHFLDLKNQQGFGRAFGYALTHPAALPAIIGGILADKTERFRPSGSPAPVALGGKGDVRYLLETLAVDQPQK.

The protein belongs to the glycosyltransferase 2 family.

The protein resides in the cytoplasm. The protein operates within glycan metabolism; exopolysaccharide biosynthesis. In terms of biological role, glycosyltransferase required for the synthesis of succinoglycan (EPS I). Needed for the addition of the sixth sugar (glucose), catalyzes the formation of a beta-1,6 linkage between the fifth and sixth sugar. This is Succinoglycan biosynthesis protein ExoU (exoU) from Rhizobium meliloti (strain 1021) (Ensifer meliloti).